We begin with the raw amino-acid sequence, 445 residues long: 3-phosphoshikimate 1-carboxyvinyltransferase (445 aa).

Over residues 1 to 20 (MSSTHPGRTIRSGATQNLSG) the composition is skewed to polar residues. The tract at residues 1-24 (MSSTHPGRTIRSGATQNLSGTIRP) is disordered. 3-phosphoshikimate is bound by residues lysine 28, serine 29, and arginine 33. Residue lysine 28 coordinates phosphoenolpyruvate. Phosphoenolpyruvate contacts are provided by glycine 101 and arginine 129. Positions 174, 176, 322, and 349 each coordinate 3-phosphoshikimate. Residue glutamine 176 coordinates phosphoenolpyruvate. Aspartate 322 serves as the catalytic Proton acceptor. The phosphoenolpyruvate site is built by arginine 353 and arginine 397.

It belongs to the EPSP synthase family. In terms of assembly, monomer.

It localises to the cytoplasm. It carries out the reaction 3-phosphoshikimate + phosphoenolpyruvate = 5-O-(1-carboxyvinyl)-3-phosphoshikimate + phosphate. Its pathway is metabolic intermediate biosynthesis; chorismate biosynthesis; chorismate from D-erythrose 4-phosphate and phosphoenolpyruvate: step 6/7. Its function is as follows. Catalyzes the transfer of the enolpyruvyl moiety of phosphoenolpyruvate (PEP) to the 5-hydroxyl of shikimate-3-phosphate (S3P) to produce enolpyruvyl shikimate-3-phosphate and inorganic phosphate. The polypeptide is 3-phosphoshikimate 1-carboxyvinyltransferase (Magnetococcus marinus (strain ATCC BAA-1437 / JCM 17883 / MC-1)).